A 318-amino-acid polypeptide reads, in one-letter code: Putative fimbrium tip subunit Fim1F (318 aa).

Positions 1–24 (MRFNVVLFMLIVALLGGLSTCSSE) are cleaved as a signal peptide. The propeptide occupies 25-50 (VPIGFDTDELSFDMSLVLLTGDMQTK).

It belongs to the bacteroidetes fimbrillin superfamily. FimA/Mfa1 family. In terms of assembly, may be part of the fimbrial tip.

Its subcellular location is the fimbrium. Putative component of the fimbrium tip. Fimbriae are filamentous appendages on the cell surface that mediate cell adhesion and biofilm formation. The protein is Putative fimbrium tip subunit Fim1F of Parabacteroides distasonis (strain ATCC 8503 / DSM 20701 / CIP 104284 / JCM 5825 / NCTC 11152).